Here is a 316-residue protein sequence, read N- to C-terminus: Beta-ketoacyl-[acyl-carrier-protein] synthase III (316 aa).

Active-site residues include Cys112 and His243. Residues Gln244–Arg248 are ACP-binding. The active site involves Asn273.

The protein belongs to the thiolase-like superfamily. FabH family. As to quaternary structure, homodimer.

It is found in the cytoplasm. The enzyme catalyses malonyl-[ACP] + acetyl-CoA + H(+) = 3-oxobutanoyl-[ACP] + CO2 + CoA. Its pathway is lipid metabolism; fatty acid biosynthesis. In terms of biological role, catalyzes the condensation reaction of fatty acid synthesis by the addition to an acyl acceptor of two carbons from malonyl-ACP. Catalyzes the first condensation reaction which initiates fatty acid synthesis and may therefore play a role in governing the total rate of fatty acid production. Possesses both acetoacetyl-ACP synthase and acetyl transacylase activities. Its substrate specificity determines the biosynthesis of branched-chain and/or straight-chain of fatty acids. The sequence is that of Beta-ketoacyl-[acyl-carrier-protein] synthase III from Actinobacillus succinogenes (strain ATCC 55618 / DSM 22257 / CCUG 43843 / 130Z).